The following is a 265-amino-acid chain: Methylthioribulose-1-phosphate dehydratase (265 aa).

Residue C116 coordinates substrate. Positions 134 and 136 each coordinate Zn(2+). E159 serves as the catalytic Proton donor/acceptor. H224 contributes to the Zn(2+) binding site.

Belongs to the aldolase class II family. MtnB subfamily. Zn(2+) is required as a cofactor.

The protein localises to the cytoplasm. It carries out the reaction 5-(methylsulfanyl)-D-ribulose 1-phosphate = 5-methylsulfanyl-2,3-dioxopentyl phosphate + H2O. The protein operates within amino-acid biosynthesis; L-methionine biosynthesis via salvage pathway; L-methionine from S-methyl-5-thio-alpha-D-ribose 1-phosphate: step 2/6. In terms of biological role, catalyzes the dehydration of methylthioribulose-1-phosphate (MTRu-1-P) into 2,3-diketo-5-methylthiopentyl-1-phosphate (DK-MTP-1-P). The polypeptide is Methylthioribulose-1-phosphate dehydratase (Debaryomyces hansenii (strain ATCC 36239 / CBS 767 / BCRC 21394 / JCM 1990 / NBRC 0083 / IGC 2968) (Yeast)).